A 273-amino-acid polypeptide reads, in one-letter code: NAD kinase (273 aa).

D53 functions as the Proton acceptor in the catalytic mechanism. Residues 53 to 54 (DG), R58, 128 to 129 (NE), D157, 168 to 173 (TAYNFS), and A192 each bind NAD(+).

The protein belongs to the NAD kinase family. A divalent metal cation is required as a cofactor.

It is found in the cytoplasm. The enzyme catalyses NAD(+) + ATP = ADP + NADP(+) + H(+). Functionally, involved in the regulation of the intracellular balance of NAD and NADP, and is a key enzyme in the biosynthesis of NADP. Catalyzes specifically the phosphorylation on 2'-hydroxyl of the adenosine moiety of NAD to yield NADP. This is NAD kinase from Finegoldia magna (strain ATCC 29328 / DSM 20472 / WAL 2508) (Peptostreptococcus magnus).